The following is a 94-amino-acid chain: MSGTVAQPEGITNPPIDELLEATDSKYSLVIYAAKRARQINAYYSQLGEGLLEYVGPLVETTSAQEKPLSIALREINSGLLTHETITDPLPPIS.

Belongs to the RNA polymerase subunit omega family. In terms of assembly, the RNAP catalytic core consists of 2 alpha, 1 beta, 1 beta' and 1 omega subunit. When a sigma factor is associated with the core the holoenzyme is formed, which can initiate transcription.

It catalyses the reaction RNA(n) + a ribonucleoside 5'-triphosphate = RNA(n+1) + diphosphate. Promotes RNA polymerase assembly. Latches the N- and C-terminal regions of the beta' subunit thereby facilitating its interaction with the beta and alpha subunits. This is DNA-directed RNA polymerase subunit omega from Parafrankia sp. (strain EAN1pec).